The following is a 526-amino-acid chain: Non-reducing end alpha-L-arabinofuranosidase BoGH43A (526 aa).

Residues 1 to 20 form the signal peptide; it reads MRNALFLIFISLCSVCKSSA. Asp34 (proton acceptor) is an active-site residue. Glu189 functions as the Proton donor in the catalytic mechanism.

The protein belongs to the glycosyl hydrolase 43 family.

It is found in the periplasm. The enzyme catalyses Hydrolysis of terminal non-reducing alpha-L-arabinofuranoside residues in alpha-L-arabinosides.. It participates in glucan metabolism; xyloglucan degradation. Its function is as follows. Alpha-L-arabinofuranosidase involved in xyloglucan degradation by mediating the cleavage of terminal non-reducing alpha-L-arabinofuranoside residues in xyloglucan branches, converting the 'S' units to 'X' units. The polypeptide is Non-reducing end alpha-L-arabinofuranosidase BoGH43A (Bacteroides ovatus (strain ATCC 8483 / DSM 1896 / JCM 5824 / BCRC 10623 / CCUG 4943 / NCTC 11153)).